Reading from the N-terminus, the 355-residue chain is 3'-5' exonuclease (355 aa).

The interval 1–121 (MDKYLIKLPN…PSPEKEKPEK (121 aa)) is disordered. 3 stretches are compositionally biased toward basic and acidic residues: residues 17–29 (VSDKKEVVKKETP), 36–50 (AKKDTPKQEKEKENT), and 72–92 (KNLDTPEVTQEKESVESENPP). 2 positions are modified to phosphoserine: Ser105 and Ser113. In terms of domain architecture, 3'-5' exonuclease spans 147–315 (VMQWVEKQKE…GQVIYRDLEQ (169 aa)). Positions 164, 166, and 302 each coordinate Mg(2+).

The protein belongs to the WRNexo family.

The protein localises to the nucleus. In terms of biological role, has exonuclease activity on both single-stranded and duplex templates bearing overhangs, but not blunt ended duplex DNA, and cleaves in a 3'-5' direction. Essential for the formation of DNA replication focal centers. Has an important role in maintaining genome stability. In Drosophila ananassae (Fruit fly), this protein is 3'-5' exonuclease.